Here is a 356-residue protein sequence, read N- to C-terminus: Epoxide hydrolase B (356 aa).

Residues 28–129 (PLVVLLHGFP…RCAGVVGISV (102 aa)) form the AB hydrolase-1 domain. The Nucleophile role is filled by Asp-104. Catalysis depends on His-333, which acts as the Proton acceptor.

This sequence belongs to the AB hydrolase superfamily. Epoxide hydrolase family. Homodimer.

The enzyme catalyses an epoxide + H2O = an ethanediol. Functionally, could be involved in detoxification of extraneous host-cell epoxides. Catalyzes the hydrolysis of small aromatic epoxide-containing substrates such as trans-1,3-diphenylpropene oxide, trans and cis-stilbene oxide, and terpenoid epoxide. The chain is Epoxide hydrolase B from Mycobacterium tuberculosis (strain CDC 1551 / Oshkosh).